Consider the following 191-residue polypeptide: Endoribonuclease YbeY (191 aa).

Zn(2+) is bound by residues His-122, His-126, and His-132. The segment at 164–191 (QPKPSGPKAFPDAAERAELDKEVPGGGI) is disordered. Basic and acidic residues predominate over residues 176–191 (AAERAELDKEVPGGGI).

The protein belongs to the endoribonuclease YbeY family. The cofactor is Zn(2+).

It is found in the cytoplasm. Functionally, single strand-specific metallo-endoribonuclease involved in late-stage 70S ribosome quality control and in maturation of the 3' terminus of the 16S rRNA. The sequence is that of Endoribonuclease YbeY from Corynebacterium aurimucosum (strain ATCC 700975 / DSM 44827 / CIP 107346 / CN-1) (Corynebacterium nigricans).